The primary structure comprises 710 residues: DNA-directed RNA polymerase III subunit RPC5 (710 aa).

Over residues 146-155 (DAKHREREAA) the composition is skewed to basic and acidic residues. Positions 146–169 (DAKHREREAANEAGDSSQDEAEED) are disordered. Ser-161 and Ser-162 each carry phosphoserine. Lys-171 is covalently cross-linked (Glycyl lysine isopeptide (Lys-Gly) (interchain with G-Cter in SUMO2)). At Ser-192 the chain carries Phosphoserine. A Phosphotyrosine modification is found at Tyr-224. A Glycyl lysine isopeptide (Lys-Gly) (interchain with G-Cter in SUMO2) cross-link involves residue Lys-432. Lys-498 is covalently cross-linked (Glycyl lysine isopeptide (Lys-Gly) (interchain with G-Cter in SUMO1); alternate). Lys-498 participates in a covalent cross-link: Glycyl lysine isopeptide (Lys-Gly) (interchain with G-Cter in SUMO2); alternate. Positions 498–526 (KEEPLSEEEADGAELEAEEEEPMDTAPST) are disordered. The segment covering 502-520 (LSEEEADGAELEAEEEEPM) has biased composition (acidic residues). A Phosphoserine modification is found at Ser-503. The segment at 558 to 710 (NPVACELKAF…MWYLKGTVQS (153 aa)) is required for Pol III complex stability. Residue Lys-661 forms a Glycyl lysine isopeptide (Lys-Gly) (interchain with G-Cter in SUMO2) linkage.

Component of the RNA polymerase III complex consisting of at least 17 subunits: a ten-subunit horseshoe-shaped catalytic core composed of POLR3A/RPC1, POLR3B/RPC2, POLR1C/RPAC1, POLR1D/RPAC2, POLR3K/RPC10, POLR2E/RPABC1, POLR2F/RPABC2, POLR2H/RPABC3, POLR2K/RPABC4 and POLR2L/RPABC5; the stalk composed of two subunits POLR3H/RPC8 and CRCP/RPC9, forming a structural mobile part that protrudes out of the core and functions primarily in transcription initiation; and additional subunits homologous to general transcription factors of the RNA polymerase II machinery, POLR3D/RPC4-POLR3E/RPC5 heterodimer and POLR3/CRPC3-POLR3F/RPC6-POLR3G/RPC7 heterotrimer.

The protein localises to the nucleus. DNA-dependent RNA polymerase catalyzes the transcription of DNA into RNA using the four ribonucleoside triphosphates as substrates. Specific peripheric component of RNA polymerase III (Pol III) which synthesizes small non-coding RNAs including 5S rRNA, snRNAs, tRNAs and miRNAs from at least 500 distinct genomic loci. Assembles with POLR3D/RPC4 forming a subcomplex that binds the Pol III core. Enables recruitment of Pol III at transcription initiation site and drives transcription initiation from both type 2 and type 3 DNA promoters. Required for efficient transcription termination and reinitiation. Plays a key role in sensing and limiting infection by intracellular bacteria and DNA viruses. Acts as a nuclear and cytosolic DNA sensor involved in innate immune response. Can sense non-self dsDNA that serves as template for transcription into dsRNA. The non-self RNA polymerase III transcripts, such as Epstein-Barr virus-encoded RNAs (EBERs) induce type I interferon and NF-kappa-B through the RIG-I pathway. The chain is DNA-directed RNA polymerase III subunit RPC5 from Mus musculus (Mouse).